The primary structure comprises 148 residues: Deoxyuridine 5'-triphosphate nucleotidohydrolase (148 aa).

Substrate is bound by residues R67–G69, N80, L84–D86, and M94.

Belongs to the dUTPase family. The cofactor is Mg(2+).

It catalyses the reaction dUTP + H2O = dUMP + diphosphate + H(+). It participates in pyrimidine metabolism; dUMP biosynthesis; dUMP from dCTP (dUTP route): step 2/2. Its function is as follows. This enzyme is involved in nucleotide metabolism: it produces dUMP, the immediate precursor of thymidine nucleotides and it decreases the intracellular concentration of dUTP so that uracil cannot be incorporated into DNA. The chain is Deoxyuridine 5'-triphosphate nucleotidohydrolase from Paraburkholderia phytofirmans (strain DSM 17436 / LMG 22146 / PsJN) (Burkholderia phytofirmans).